We begin with the raw amino-acid sequence, 762 residues long: MFIFIFLSLWTLLVMGREEGGVGSEEGVGKQCHPSLPPRCPSRSPSDQPWTHPDQSQLFADLSREELTTVMSFLTQQLGPDLVDAAQARPSDNCVFSVELQLPPKAAALAHLDRGSPPPAREALAIVFFGGQPQPNVTELVVGPLPQPSYMRDVTVERHGGPLPYYRRPVLLREYLDIDQMIFNRELPQAAGVLHHCCSYKQGGQKLLTMNSAPRGVQSGDRSTWFGIYYNITKGGPYLHPVGLELLVDHKALDPADWTVQKVFFQGRYYENLAQLEEQFEAGQVNVVVIPDDGTGGFWSLKSQVPPGPTPPLQFHPQGPRFSVQGNRVASSLWTFSFGLGAFSGPRVFDVRFQGERLAYEISLQEAGAVYGGNTPAAMLTRYMDSGFGMGYFATPLIRGVDCPYLATYMDWHFVVESQTPKTLHDAFCVFEQNKGLPLRRHHSDFLSHYFGGVAQTVLVFRSVSTMLNYDYVWDMVFYPNGAIEVKLHATGYISSAFLFGAARRYGNQVGEHTLGPVHTHSAHYKVDLDVGGLENWVWAEDMAFVPTAIPWSPEHQIQRLQVTRKQLETEEQAAFPLGGASPRYLYLASKQSNKWGHPRGYRIQTVSFAGGPMPQNSPMERAFSWGRYQLAITQRKETEPSSSSVFNQNDPWTPTVDFSDFINNETIAGKDLVAWVTAGFLHIPHAEDIPNTVTVGNGVGFFLRPYNFFDQEPSMDSADSIYFREGQDAGSCEINPLACLPQAATCAPDLPVFSHGGYPEY.

The signal sequence occupies residues 1-16; that stretch reads MFIFIFLSLWTLLVMG. Positions 23-54 are disordered; that stretch reads GSEEGVGKQCHPSLPPRCPSRSPSDQPWTHPD. N-linked (GlcNAc...) asparagine glycosylation occurs at N136. Residues C197 and C198 are joined by a disulfide bond. N-linked (GlcNAc...) asparagine glycosylation occurs at N231. 383 to 393 provides a ligand contact to substrate; the sequence is YMDSGFGMGYF. D385 (proton acceptor) is an active-site residue. Cysteines 403 and 429 form a disulfide. 467 to 472 is a binding site for substrate; it reads MLNYDY. The Schiff-base intermediate with substrate; via topaquinone role is filled by Y470. 2',4',5'-topaquinone is present on Y470. Cu cation contacts are provided by H519 and H521. Ca(2+) is bound by residues D528, L529, D530, E571, F662, and N664. N-linked (GlcNAc...) asparagine glycosylation is present at N665. 3 residues coordinate Ca(2+): E666, D672, and L673. H683 provides a ligand contact to Cu cation. A disulfide bridge links C733 with C740.

The protein belongs to the copper/topaquinone oxidase family. Homodimer; disulfide-linked. It depends on Cu cation as a cofactor. Ca(2+) serves as cofactor. L-topaquinone is required as a cofactor. Post-translationally, topaquinone (TPQ) is generated by copper-dependent autoxidation of a specific tyrosyl residue. As to expression, liver.

The protein resides in the secreted. Its subcellular location is the extracellular space. The catalysed reaction is a primary methyl amine + O2 + H2O = an aldehyde + H2O2 + NH4(+). In Bos taurus (Bovine), this protein is Primary amine oxidase, liver isozyme.